The sequence spans 102 residues: Small ribosomal subunit protein uS10 (102 aa).

This sequence belongs to the universal ribosomal protein uS10 family. Part of the 30S ribosomal subunit.

Involved in the binding of tRNA to the ribosomes. This is Small ribosomal subunit protein uS10 from Frankia alni (strain DSM 45986 / CECT 9034 / ACN14a).